A 132-amino-acid polypeptide reads, in one-letter code: Large ribosomal subunit protein bL17 (132 aa).

Belongs to the bacterial ribosomal protein bL17 family. As to quaternary structure, part of the 50S ribosomal subunit. Contacts protein L32.

The polypeptide is Large ribosomal subunit protein bL17 (Shewanella woodyi (strain ATCC 51908 / MS32)).